We begin with the raw amino-acid sequence, 437 residues long: Probable inactive DNA (cytosine-5)-methyltransferase DRM1B (437 aa).

UBA domains follow at residues 20-60 (SAPS…LLQL) and 120-164 (EMSE…IYAP). Residues 243-437 (VHRNLPDHAL…LIQLHTTSLC (195 aa)) enclose the SAM-dependent MTase DRM-type domain.

Belongs to the class I-like SAM-binding methyltransferase superfamily. DRM-methyltransferase family.

The protein resides in the nucleus. In terms of biological role, involved in de novo DNA methylation. Involved in RNA-directed DNA methylation (RdDM). This chain is Probable inactive DNA (cytosine-5)-methyltransferase DRM1B, found in Oryza sativa subsp. japonica (Rice).